The sequence spans 201 residues: Small ribosomal subunit protein uS4c (201 aa).

The disordered stretch occupies residues 20–44; the sequence is GLTSKRPRAGSDLRNQSRSGKKSQY. In terms of domain architecture, S4 RNA-binding spans 89 to 152; sequence MRLDNILFRL…NSRTLVQNLL (64 aa).

Belongs to the universal ribosomal protein uS4 family. Part of the 30S ribosomal subunit. Contacts protein S5. The interaction surface between S4 and S5 is involved in control of translational fidelity.

The protein resides in the plastid. Its subcellular location is the chloroplast. Its function is as follows. One of the primary rRNA binding proteins, it binds directly to 16S rRNA where it nucleates assembly of the body of the 30S subunit. In terms of biological role, with S5 and S12 plays an important role in translational accuracy. In Aethionema cordifolium (Lebanon stonecress), this protein is Small ribosomal subunit protein uS4c (rps4).